The chain runs to 240 residues: Putative glycyl-radical enzyme activating enzyme MJ1227 (240 aa).

The Radical SAM core domain maps to 14–232 (IDYPKKASAV…KKYIDNVVIR (219 aa)). Residues C29, C33, and C36 each contribute to the [4Fe-4S] cluster site. S-adenosyl-L-methionine-binding positions include 35–37 (YCH), G71, and 126–128 (FDK).

Belongs to the organic radical-activating enzymes family. It depends on [4Fe-4S] cluster as a cofactor.

It carries out the reaction glycyl-[protein] + reduced [flavodoxin] + S-adenosyl-L-methionine = glycin-2-yl radical-[protein] + semiquinone [flavodoxin] + 5'-deoxyadenosine + L-methionine + H(+). This is Putative glycyl-radical enzyme activating enzyme MJ1227 from Methanocaldococcus jannaschii (strain ATCC 43067 / DSM 2661 / JAL-1 / JCM 10045 / NBRC 100440) (Methanococcus jannaschii).